A 206-amino-acid chain; its full sequence is LexA repressor (206 aa).

A DNA-binding region (H-T-H motif) is located at residues 28–48 (RAEIARELGFRSANAAEEHLK). Catalysis depends on for autocatalytic cleavage activity residues S123 and K160.

The protein belongs to the peptidase S24 family. Homodimer.

The enzyme catalyses Hydrolysis of Ala-|-Gly bond in repressor LexA.. In terms of biological role, represses a number of genes involved in the response to DNA damage (SOS response), including recA and lexA. In the presence of single-stranded DNA, RecA interacts with LexA causing an autocatalytic cleavage which disrupts the DNA-binding part of LexA, leading to derepression of the SOS regulon and eventually DNA repair. The protein is LexA repressor of Vibrio atlanticus (strain LGP32) (Vibrio splendidus (strain Mel32)).